The chain runs to 223 residues: Probable GTP-binding protein EngB (223 aa).

An EngB-type G domain is found at 25–199 (TGVEIAFAGR…SRLLQDWFDE (175 aa)). GTP is bound by residues 33 to 40 (GRSNAGKS), 60 to 64 (GRTQH), 78 to 81 (DLPG), 145 to 148 (TKAD), and 178 to 180 (FSS). Mg(2+) contacts are provided by Ser-40 and Thr-62.

Belongs to the TRAFAC class TrmE-Era-EngA-EngB-Septin-like GTPase superfamily. EngB GTPase family. Mg(2+) serves as cofactor.

In terms of biological role, necessary for normal cell division and for the maintenance of normal septation. This Nitrosomonas eutropha (strain DSM 101675 / C91 / Nm57) protein is Probable GTP-binding protein EngB.